We begin with the raw amino-acid sequence, 267 residues long: GTP cyclohydrolase MptA (267 aa).

Belongs to the GTP cyclohydrolase IV family. Homodimer. Fe(2+) is required as a cofactor.

The catalysed reaction is GTP + H2O = 7,8-dihydroneopterin 2',3'-cyclic phosphate + formate + diphosphate + H(+). The protein operates within cofactor biosynthesis; 5,6,7,8-tetrahydromethanopterin biosynthesis. Converts GTP to 7,8-dihydro-D-neopterin 2',3'-cyclic phosphate, the first intermediate in the biosynthesis of coenzyme methanopterin. This Pyrococcus furiosus (strain ATCC 43587 / DSM 3638 / JCM 8422 / Vc1) protein is GTP cyclohydrolase MptA.